A 622-amino-acid chain; its full sequence is Gamma tubulin complex adapter SPC72 (622 aa).

2 disordered regions span residues 1 to 58 (MVRR…PALM) and 221 to 263 (DKEE…IHDS). The segment covering 228–238 (LAQSSPAGSQL) has biased composition (polar residues). The segment covering 239–250 (ESRDSPSSKEEN) has biased composition (basic and acidic residues).

In terms of assembly, homooligomer. Interacts with CDC5, KAR1, KIN4, SPC97, SPC98, STU2 and TUB4. Post-translationally, phosphorylated by CDC5.

Its subcellular location is the cytoplasm. It is found in the cytoskeleton. The protein resides in the microtubule organizing center. The protein localises to the spindle pole body. Functionally, spindle pole body (SPB) component that acts as the gamma-tubulin complex-binding protein of the SPB outer plaque. Anchors cytoplasmic microtubules at the half bridge of the spindle pole body (SPB) and accordingly functions in nuclear position and spindle orientation, including anaphase spindle migration into the bud. Recruits KIN4 kinase to both SPBs when cytoplasmic microtubules are defective, to delay mitotic exit. Links cytoplasmic microtubules with spindle orientation checkpoint (SPOC) components and, therefore, could function as part of the sensors of spindle orientation defects. Required for cytoplasmic astral microtubule growth during mitosis. Is strictly required for mating and karyogamy. This Saccharomyces cerevisiae (strain ATCC 204508 / S288c) (Baker's yeast) protein is Gamma tubulin complex adapter SPC72 (SPC72).